The following is a 599-amino-acid chain: Adenine deaminase (599 aa).

Belongs to the metallo-dependent hydrolases superfamily. Adenine deaminase family. Mn(2+) is required as a cofactor.

It carries out the reaction adenine + H2O + H(+) = hypoxanthine + NH4(+). In Clostridium botulinum (strain Loch Maree / Type A3), this protein is Adenine deaminase.